Consider the following 138-residue polypeptide: Spermatid nuclear transition protein 4 (138 aa).

The segment covering 1–11 (AKVSRKPREPR) has biased composition (basic and acidic residues). The interval 1 to 138 (AKVSRKPREP…QGVTRRGRRY (138 aa)) is disordered. Phosphoserine; by PKC is present on Ser-4. Residues 5–23 (RKPREPRTAVTQSTRRIKR) carry the Nuclear localization signal motif. 3 stretches are compositionally biased toward basic residues: residues 19–34 (RRIK…RSRG), 43–57 (MKIK…RRKI), and 65–74 (KKAKKARKHF). Thr-26 is subject to Phosphothreonine; by PKA. A Nuclear localization signal motif is present at residues 54-72 (RRKIQTSAGQPKKAKKARK). Over residues 86–101 (NKKTNQNKRQNQNKRQ) the composition is skewed to low complexity. Positions 120–131 (PTTSCKWCSQGV) are enriched in polar residues.

It localises to the nucleus. It is found in the chromosome. Functionally, involved in nuclear basic protein transition: histones are replaced by spermatid specific proteins which are themselves replaced by protamines in late spermatids. This Sus scrofa (Pig) protein is Spermatid nuclear transition protein 4 (TNP4).